A 554-amino-acid polypeptide reads, in one-letter code: (S)-1-hydroxy-N-methylcanadine 13-hydroxylase CYP82X2 (554 aa).

Residues Ile23–Ile43 form a helical membrane-spanning segment. A heme-binding site is contributed by Cys494.

The protein belongs to the cytochrome P450 family. Requires heme as cofactor. Highly expressed in capsules. Expressed is stems.

It is found in the membrane. It catalyses the reaction (S)-1-hydroxy-N-methylcanadine + reduced [NADPH--hemoprotein reductase] + O2 = (13S,14R)-1,13-dihydroxy-N-methylcanadine + oxidized [NADPH--hemoprotein reductase] + H2O + H(+). The protein operates within alkaloid biosynthesis. Cytochrome P450 involved in the biosynthesis of the benzylisoquinoline alkaloid noscapine. Converts (S)-1-hydroxy-N-methylcanadine to (13S,14R)-1,13-dihydroxy-N-methylcanadine. The sequence is that of (S)-1-hydroxy-N-methylcanadine 13-hydroxylase CYP82X2 from Papaver somniferum (Opium poppy).